The following is a 200-amino-acid chain: Imidazoleglycerol-phosphate dehydratase (200 aa).

It belongs to the imidazoleglycerol-phosphate dehydratase family.

The protein resides in the cytoplasm. The catalysed reaction is D-erythro-1-(imidazol-4-yl)glycerol 3-phosphate = 3-(imidazol-4-yl)-2-oxopropyl phosphate + H2O. It functions in the pathway amino-acid biosynthesis; L-histidine biosynthesis; L-histidine from 5-phospho-alpha-D-ribose 1-diphosphate: step 6/9. This chain is Imidazoleglycerol-phosphate dehydratase, found in Renibacterium salmoninarum (strain ATCC 33209 / DSM 20767 / JCM 11484 / NBRC 15589 / NCIMB 2235).